The following is a 132-amino-acid chain: Acetylcholinesterase (132 aa).

N-linked (GlcNAc...) asparagine glycosylation is present at Asn37. Cys45 and Cys72 form a disulfide bridge.

This sequence belongs to the type-B carboxylesterase/lipase family.

It is found in the synapse. Its subcellular location is the secreted. The protein localises to the cell membrane. The enzyme catalyses acetylcholine + H2O = choline + acetate + H(+). Its function is as follows. Rapidly hydrolyzes choline released into the synapse. This Culex pipiens pipiens (Northern house mosquito) protein is Acetylcholinesterase (ACE-1).